The primary structure comprises 397 residues: Acetate kinase 2 (397 aa).

Asn-10 contacts Mg(2+). Residue Lys-17 participates in ATP binding. Residue Arg-90 coordinates substrate. Asp-147 (proton donor/acceptor) is an active-site residue. Residues 207–211 (HLGNG), 281–283 (DCR), and 329–333 (GIGEN) contribute to the ATP site. Glu-383 lines the Mg(2+) pocket.

It belongs to the acetokinase family. As to quaternary structure, homodimer. Mg(2+) serves as cofactor. It depends on Mn(2+) as a cofactor.

It is found in the cytoplasm. It carries out the reaction acetate + ATP = acetyl phosphate + ADP. Its pathway is metabolic intermediate biosynthesis; acetyl-CoA biosynthesis; acetyl-CoA from acetate: step 1/2. In terms of biological role, catalyzes the formation of acetyl phosphate from acetate and ATP. Can also catalyze the reverse reaction. This chain is Acetate kinase 2, found in Photobacterium profundum (strain SS9).